Consider the following 697-residue polypeptide: uncharacterized protein (697 aa).

Transmembrane regions (helical) follow at residues 45-65 (LCAV…LALL), 86-106 (TVAA…MGVV), 128-148 (VVVS…GMLA), 198-218 (VLLG…WWAL), and 280-300 (HLAI…ILAG). 2 consecutive ABC transporter domains span residues 251 to 473 (VRLD…QPQH) and 477 to 696 (LELV…AGGM). Residues 285-292 (GANGSGKT) and 514-521 (GGNGSGKS) each bind ATP. Residues 522–542 (TLAWIMAGLTIPTTGACLLDG) traverse the membrane as a helical segment.

This sequence belongs to the ABC transporter superfamily.

The protein localises to the cell membrane. This is an uncharacterized protein from Mycobacterium tuberculosis (strain CDC 1551 / Oshkosh).